Reading from the N-terminus, the 523-residue chain is Synaptotagmin-10 (523 aa).

Over 1-55 the chain is Vesicular; sequence MSFHKEDGVNSLCQKALHIVTELCFAGQVEWEKCSGIFPRDRGSQGGSSTDISVS. A cysteine motif region spans residues 13–35; it reads CQKALHIVTELCFAGQVEWEKCS. Residues 56 to 76 traverse the membrane as a helical segment; sequence LLAVVVSFCGLALLVVSLFVF. The Cytoplasmic segment spans residues 77–523; it reads WKLCWPCWKS…CPSPKPPSTP (447 aa). Thr136 bears the Phosphothreonine mark. C2 domains lie at 231 to 352 and 363 to 496; these read ICGK…TVWK and DLGE…THWH. The Ca(2+) site is built by Asp262, Asp268, Asp320, Phe321, Asp322, Ser325, Asp328, Asp394, Asp400, Asp454, and Asp456.

Belongs to the synaptotagmin family. Homodimer; disulfide-linked via the cysteine motif. Can also form heterodimers with SYT3, SYT6, SYT7 and SYT9. Requires Ca(2+) as cofactor. Expressed only in pancreas, lung and kidney.

It localises to the cytoplasmic vesicle. It is found in the secretory vesicle membrane. Functionally, ca(2+) sensor specifically required for the Ca(2+)-dependent exocytosis of secretory vesicles containing IGF1 in neurons of the olfactory bulb. Exocytosis of IGF1 is required for sensory perception of smell. Not involved in Ca(2+)-dependent synaptic vesicle exocytosis. Acts through Ca(2+) and phospholipid binding to the C2 domain: Ca(2+) induces binding of the C2-domains to phospholipid membranes and to assembled SNARE-complexes; both actions contribute to triggering exocytosis. The sequence is that of Synaptotagmin-10 (SYT10) from Homo sapiens (Human).